The sequence spans 1010 residues: Retinoblastoma-related protein 1 (1010 aa).

The disordered stretch occupies residues 1–23 (MEGAAPPASSGSEVTGAGSGKVD). Residues 419 to 619 (TPVSTAMTTA…EKGSSMYNSL (201 aa)) are domain A. A pocket region spans residues 419–861 (TPVSTAMTTA…NEVFIPTVKP (443 aa)). Residues 620–730 (IVARPTLSAE…PAAGGELCAE (111 aa)) are spacer. Residues 657–679 (LPPLPFQKQEHSPDKDEVRSPKR) are disordered. A compositionally biased stretch (basic and acidic residues) spans 664–679 (KQEHSPDKDEVRSPKR). The segment at 731-861 (TGIGVFLSKI…NEVFIPTVKP (131 aa)) is domain B. The segment at 868–898 (SGTSPNKKNEEKCAADGPYPESPRLSRFPNL) is disordered.

This sequence belongs to the retinoblastoma protein (RB) family.

The protein localises to the nucleus. Regulator of biological processes that recruits a histone deacetylase to control gene transcription. May play a role in the entry into mitosis, negatively regulating the cell proliferation. Formation of stable complexes with geminiviridae replication-associated proteins may create a cellular environment which favors viral DNA replication. The protein is Retinoblastoma-related protein 1 (RBR1) of Oryza sativa subsp. indica (Rice).